The following is a 298-amino-acid chain: Iron-regulated virulence regulatory protein IrgB (298 aa).

An HTH lysR-type domain is found at 1–59 (MQDLSAVKAFHALCQHKSLTAAAKALEQPKSTLSRRLAQLEEDLGQSLLMRQGNRLTLT). Positions 19–38 (LTAAAKALEQPKSTLSRRLA) form a DNA-binding region, H-T-H motif.

Belongs to the LysR transcriptional regulatory family.

Functionally, transcription activation of the irgA gene. In the presence of sufficient iron, transcription of both irgA and irgB is negatively regulated by a fur-like protein. In low iron conditions, negative regulation of transcription is removed, and production of irgB leads to positive transcriptional activation of irgA. In Vibrio cholerae serotype O1 (strain ATCC 39315 / El Tor Inaba N16961), this protein is Iron-regulated virulence regulatory protein IrgB (irgB).